The sequence spans 187 residues: Photosystem I assembly protein Ycf4 (187 aa).

2 helical membrane passes run 25–45 (YLWAIIVTMGGIGFLLSGISS) and 69–89 (MSFYGLLGTIYGIFLWLTVIW).

This sequence belongs to the Ycf4 family.

The protein resides in the cellular thylakoid membrane. Its function is as follows. Seems to be required for the assembly of the photosystem I complex. The polypeptide is Photosystem I assembly protein Ycf4 (Trichodesmium erythraeum (strain IMS101)).